A 319-amino-acid polypeptide reads, in one-letter code: MSDYQVLLYYKYTTIDDPETFAKEHLAACKEMELKGRILVATEGINGTVSGTVEATNKYMDYMANDARFADMVFKIDAADAHAFKKMHVRPRAEIVSLSLEEDVNPLEVTGTYLEPSEFREALLDEDTVILDARNDYEFDIGHFRGAVRPDIQNFRELPGWIEDNREQLADKKIVTYCTGGIRCEKFSGWLKTAGFDDVSQLHGGIATYGKNEETKGELWDGQMYVFDERIAVPINQVNPTIVGKDYFDGTPCERYINCANPYCNKQILASVENEKKYLRSCSHDCRVHPANLYTKNLSKEEFTERLQAIDETLPEMVQ.

A Rhodanese domain is found at 124 to 218 (LDEDTVILDA…YGKNEETKGE (95 aa)). Cys178 acts as the Cysteine persulfide intermediate in catalysis.

It belongs to the TrhO family.

It carries out the reaction uridine(34) in tRNA + AH2 + O2 = 5-hydroxyuridine(34) in tRNA + A + H2O. Its function is as follows. Catalyzes oxygen-dependent 5-hydroxyuridine (ho5U) modification at position 34 in tRNAs. The polypeptide is tRNA uridine(34) hydroxylase (Listeria monocytogenes serotype 4a (strain HCC23)).